The following is a 301-amino-acid chain: D-psicose 3-epimerase (301 aa).

Tyr-16 is a binding site for substrate. Catalysis depends on Glu-162, which acts as the Proton donor/acceptor. A Mn(2+)-binding site is contributed by Glu-162. Substrate-binding positions include Glu-168 and 195–198 (DTFH). Asp-195 and His-221 together coordinate Mn(2+). Arg-227 contacts substrate. Glu-256 (proton donor/acceptor) is an active-site residue. Glu-256 contributes to the Mn(2+) binding site.

Belongs to the hyi family. As to quaternary structure, homotetramer. Requires Mn(2+) as cofactor. Co(2+) serves as cofactor.

It carries out the reaction D-allulose = keto-D-fructose. With respect to regulation, completely inhibited by EDTA and partially inhibited by Zn(2+), Mg(2+) and Cu(2+). Its function is as follows. Involved in the biosynthesis of D-psicose. Catalyzes the reversible epimerization of D-fructose at the C3 position to yield D-psicose. The enzyme is highly specific for D-psicose and shows very low activity with D-tagatose. In Enterocloster bolteae (strain ATCC BAA-613 / DSM 15670 / CCUG 46953 / JCM 12243 / WAL 16351) (Clostridium bolteae), this protein is D-psicose 3-epimerase.